Here is an 863-residue protein sequence, read N- to C-terminus: Alanine--tRNA ligase (863 aa).

Residues His552, His556, Cys654, and His658 each contribute to the Zn(2+) site.

This sequence belongs to the class-II aminoacyl-tRNA synthetase family. The cofactor is Zn(2+).

It is found in the cytoplasm. The enzyme catalyses tRNA(Ala) + L-alanine + ATP = L-alanyl-tRNA(Ala) + AMP + diphosphate. In terms of biological role, catalyzes the attachment of alanine to tRNA(Ala) in a two-step reaction: alanine is first activated by ATP to form Ala-AMP and then transferred to the acceptor end of tRNA(Ala). Also edits incorrectly charged Ser-tRNA(Ala) and Gly-tRNA(Ala) via its editing domain. In Nitrosomonas eutropha (strain DSM 101675 / C91 / Nm57), this protein is Alanine--tRNA ligase.